The chain runs to 914 residues: PHD finger protein 14 (914 aa).

Residues 19 to 276 (DALDYDSSDD…EDSLLERPQT (258 aa)) form a disordered region. Residues 53 to 68 (ESAAGSESDSDAAAAS) are compositionally biased toward low complexity. The segment covering 90-102 (EKVKESFSEETSS) has biased composition (basic and acidic residues). Composition is skewed to acidic residues over residues 155–168 (ELNE…EDDN) and 191–233 (GEED…DSEE). A PHD-type 1 zinc finger spans residues 285–346 (ILICCVCLGD…PWFCDACKNG (62 aa)). Zn(2+)-binding residues include Cys-288, Cys-291, Cys-305, Cys-308, His-313, Cys-316, Cys-340, Cys-343, Cys-351, Cys-354, His-371, Cys-374, Cys-407, Cys-410, Cys-424, Cys-429, His-434, Cys-437, Cys-461, and His-464. A C2HC pre-PHD-type zinc finger spans residues 348 to 381 (SPSCELCPSQDGIFKETDAGRWVHVVCALYVPGV). A PHD-type 2 zinc finger spans residues 405–465 (KECSLCEDTR…PFFAYCKQHA (61 aa)). Positions 596 to 644 (MIQIQDNIVEQKNLKDKLESEQEKLHMEYDKLCESLEDLQNVNGQLRTE) form a coiled coil. The segment at 692 to 746 (LYSCGICKKNQDQHLLLLCDTCKLHYHLGCLDPPLTRMPKKTKNSYWQCSECDQA) adopts a PHD-type 3 zinc-finger fold. Zn(2+) is bound by residues Cys-695, Cys-698, Cys-710, Cys-713, His-718, Cys-721, Cys-740, and Cys-743. Residues 777 to 838 (PQEMSPEPKK…PKADDTRTEC (62 aa)) are disordered. Basic residues predominate over residues 792–802 (TRTRGQKRKRM). Positions 803-817 (SICEEEKMEEPLPRE) are enriched in basic and acidic residues. The segment at 835–888 (RTECTTCKGPGDNENLVRCDECRLCYHFGCLDPPLKKSPKQTGYGWICQECDTS) adopts a PHD-type 4 zinc-finger fold. Cys-838, Cys-841, Cys-853, Cys-856, His-861, Cys-864, Cys-882, and Cys-885 together coordinate Zn(2+). Residues 887–914 (TSSSKEEEAQEVEEESVNEETAEQEIPD) form a disordered region. Positions 894–914 (EAQEVEEESVNEETAEQEIPD) are enriched in acidic residues.

As to quaternary structure, interacts with histone H3.

Its subcellular location is the nucleus. Its function is as follows. Histone-binding protein. Binds preferentially to unmodified histone H3 but can also bind to a lesser extent to histone H3 trimethylated at 'Lys-9' (H3K9me3) as well as to histone H3 monomethylated at 'Lys-27' (H3K27ac) and trimethylated at 'Lys-27' (H3K27me3). Represses PDGFRA expression, thus playing a role in regulation of mesenchymal cell proliferation. In Danio rerio (Zebrafish), this protein is PHD finger protein 14.